The sequence spans 141 residues: uncharacterized protein (141 aa).

It belongs to the peptidase C56 family.

This is an uncharacterized protein from Streptomyces lividans.